Here is a 1049-residue protein sequence, read N- to C-terminus: Probable ATP-dependent permease (1049 aa).

The first 25 residues, 1–25, serve as a signal peptide directing secretion; it reads MGSHRRYLYYSILSFLLLSCSVVLA. Residues 26-324 lie on the Lumenal side of the membrane; the sequence is KQDKTPFFEG…KDPTVSWQGK (299 aa). N-linked (GlcNAc...) asparagine glycosylation is found at Asn50, Asn114, Asn165, and Asn221. A helical membrane pass occupies residues 325-345; sequence LVLALTAVMVLALFTFATFYI. The Cytoplasmic portion of the chain corresponds to 346–463; it reads SKSPLFRNGL…ISMDRKSFSK (118 aa). The 248-residue stretch at 384–631 folds into the ABC transporter domain; sequence LSFENITYSV…LRNEGYICPD (248 aa). 423–430 contributes to the ATP binding site; sequence GGSGAGKT. The chain crosses the membrane as a helical span at residues 464–481; sequence IIGFVDQDDFLLPTLTVF. Residues 482 to 793 lie on the Lumenal side of the membrane; that stretch reads ETVLNSALLR…SFKNMYRNPK (312 aa). 2 positions are modified to phosphoserine: Ser659 and Ser702. Residues 793-1044 enclose the ABC transmembrane type-2 domain; it reads KLLLGNYLLT…IMGYLALKWI (252 aa). Residues 794-814 traverse the membrane as a helical segment; that stretch reads LLLGNYLLTILLSLFLGTLYY. The Cytoplasmic portion of the chain corresponds to 815–828; the sequence is NVSNDISGFQNRMG. Residues 829-849 form a helical membrane-spanning segment; it reads LFFFILTYFGFVTFTGLSSFA. The Lumenal segment spans residues 850–877; the sequence is LERIIFIKERSNNYYSPLAYYISKIMSE. A helical transmembrane segment spans residues 878-898; sequence VVPLRVVPPILLSLIVYPMTG. Over 899-909 the chain is Cytoplasmic; the sequence is LNMKDNAFFKC. A helical membrane pass occupies residues 910 to 930; sequence IGILILFNLGISLEILTIGII. Residues 931-937 lie on the Lumenal side of the membrane; it reads FEDLNNS. N-linked (GlcNAc...) asparagine glycosylation occurs at Asn935. The chain crosses the membrane as a helical span at residues 938–958; that stretch reads IILSVLVLLGSLLFSGLFINT. Topologically, residues 959-1000 are cytoplasmic; that stretch reads KNITNVAFKYLKNFSVFYYAYESLLINEVKTLMLKERKYGLN. A helical membrane pass occupies residues 1001–1021; the sequence is IEVPGATILSTFGFVVQNLVF. Over 1022–1024 the chain is Lumenal; it reads DIK. The chain crosses the membrane as a helical span at residues 1025–1045; it reads ILALFNVVFLIMGYLALKWIV. Topologically, residues 1046–1049 are cytoplasmic; sequence VEQK.

This sequence belongs to the ABC transporter superfamily. ABCG family. Eye pigment precursor importer (TC 3.A.1.204) subfamily.

It localises to the endoplasmic reticulum membrane. The chain is Probable ATP-dependent permease (ADP1) from Saccharomyces cerevisiae (strain ATCC 204508 / S288c) (Baker's yeast).